The sequence spans 474 residues: Glutathione synthetase (474 aa).

An N-acetylalanine modification is found at A2. R125 serves as a coordination point for substrate. E144 serves as a coordination point for ATP. Mg(2+) contacts are provided by E144 and N146. Substrate contacts are provided by residues 148–151 (VSAS), 214–216 (ERN), Q220, and 267–270 (RDGY). ATP contacts are provided by residues K305, 364-373 (KPQREGGGNN), Y375, and 398-401 (MEKI). Position 368 (E368) interacts with Mg(2+). S415 is subject to Phosphoserine. An ATP-binding site is contributed by E425. R450 contacts substrate. ATP-binding residues include K452 and D458. 461–462 (VA) contributes to the substrate binding site.

Belongs to the eukaryotic GSH synthase family. Homodimer. The cofactor is Mg(2+).

It carries out the reaction gamma-L-glutamyl-L-cysteine + glycine + ATP = glutathione + ADP + phosphate + H(+). The catalysed reaction is gamma-L-glutamyl-(2S)-2-aminobutanoate + glycine + ATP = ophthalmate + ADP + phosphate + H(+). It participates in sulfur metabolism; glutathione biosynthesis; glutathione from L-cysteine and L-glutamate: step 2/2. In terms of biological role, catalyzes the production of glutathione from gamma-glutamylcysteine and glycine in an ATP-dependent manner. Glutathione (gamma-glutamylcysteinylglycine, GSH) is the most abundant intracellular thiol in living aerobic cells and is required for numerous processes including the protection of cells against oxidative damage, amino acid transport, the detoxification of foreign compounds, the maintenance of protein sulfhydryl groups in a reduced state and acts as a cofactor for a number of enzymes. Participates in ophthalmate biosynthesis in hepatocytes. The chain is Glutathione synthetase from Bos taurus (Bovine).